We begin with the raw amino-acid sequence, 210 residues long: CASP-like protein 3A2 (210 aa).

Topologically, residues 1–45 (MMMNGQKMAAAEVAVQLPESKMVTENIGGAAAAMRPFGRKAEVMN) are cytoplasmic. Residues 46 to 66 (VLLRVLCMVTSVAALSSMVTA) traverse the membrane as a helical segment. The Extracellular portion of the chain corresponds to 67–92 (QQSSTVSIYGFMLPIQSKWSFSHSFE). A helical transmembrane segment spans residues 93-113 (YVVGVSAVVAAHSLLQLLISV). The Cytoplasmic segment spans residues 114 to 128 (SRLLRKSPVIQSRSH). Residues 129–149 (AWLVFAGDQVFAYAMISAGAA) form a helical membrane-spanning segment. The Extracellular portion of the chain corresponds to 150–178 (ASGVTNLNRTGIRHTALPNFCKPLQSFCD). Residue N157 is glycosylated (N-linked (GlcNAc...) asparagine). Residues 179 to 199 (HVAVSIFFTFLSCFLLAASAV) traverse the membrane as a helical segment. At 200–210 (QEVIWLSRSKY) the chain is on the cytoplasmic side.

It belongs to the Casparian strip membrane proteins (CASP) family. As to quaternary structure, homodimer and heterodimers.

The protein resides in the cell membrane. The sequence is that of CASP-like protein 3A2 from Populus trichocarpa (Western balsam poplar).